The chain runs to 285 residues: Putative sugar uptake protein lmo0424 (285 aa).

9 consecutive transmembrane segments (helical) span residues 2 to 21, 31 to 50, 55 to 77, 111 to 133, 146 to 168, 172 to 194, 207 to 229, 233 to 255, and 262 to 284; these read SIYL…PIIA, QLLG…FWIL, TVLS…LLQF, WQTV…GVVM, SVSF…YVVT, FDVT…AIGI, VTFN…LATA, VATS…ILIF, and LEWT…LSLL.

It belongs to the GRP transporter (TC 2.A.7.5) family.

It is found in the cell membrane. In Listeria monocytogenes serovar 1/2a (strain ATCC BAA-679 / EGD-e), this protein is Putative sugar uptake protein lmo0424.